A 347-amino-acid chain; its full sequence is MKPPILIIIMATIMTGTMIVMLSSHWLLIWIGFEMNMLAIIPILMKKYNPRAMEASTKYFLTQATASMLLMMGVTINLLYSGQWVISKISNPIASIMMTTALTMKLGLSPFHFWVPEVTQGVTLMSGMILLTWQKIAPMSILYQISPSINTNLLMLMALTSVLVGGWGGLNQTQLRKIMAYSSIAHMGWMAAIITYNPTMMILNLTLYILMTLSTFMLFMLNSSTTTLSLSHMWNKFPLITSMILILMLSLGGLPPLSGFIPKWMIIQELTKNNMIIIPTLMAITALLNLYFYLRLTYSTALTMFPSTNNMKMKWQFEYTKKATLLPPLIITSTMLLPLTPMLSVLD.

Transmembrane regions (helical) follow at residues 3 to 23, 25 to 45, 66 to 86, 93 to 115, 149 to 169, 178 to 198, 201 to 221, 237 to 257, 274 to 294, and 325 to 345; these read PPIL…VMLS, HWLL…PILM, ASML…QWVI, IASI…HFWV, INTN…GWGG, IMAY…TYNP, MILN…LFML, FPLI…LPPL, NMII…YFYL, and LLPP…MLSV.

It belongs to the complex I subunit 2 family. Core subunit of respiratory chain NADH dehydrogenase (Complex I) which is composed of 45 different subunits. Interacts with TMEM242.

It localises to the mitochondrion inner membrane. The enzyme catalyses a ubiquinone + NADH + 5 H(+)(in) = a ubiquinol + NAD(+) + 4 H(+)(out). In terms of biological role, core subunit of the mitochondrial membrane respiratory chain NADH dehydrogenase (Complex I) which catalyzes electron transfer from NADH through the respiratory chain, using ubiquinone as an electron acceptor. Essential for the catalytic activity and assembly of complex I. The sequence is that of NADH-ubiquinone oxidoreductase chain 2 from Canis lupus (Gray wolf).